A 110-amino-acid chain; its full sequence is Nucleotide-binding protein HI1146 homolog (110 aa).

The protein belongs to the RapZ-like family.

Displays ATPase and GTPase activities. The sequence is that of Nucleotide-binding protein HI1146 homolog from Aggregatibacter actinomycetemcomitans (Actinobacillus actinomycetemcomitans).